A 373-amino-acid chain; its full sequence is Forkhead box protein F1 (373 aa).

The disordered stretch occupies residues 1 to 51; sequence MTAEIQQPPSQPPAQSSPMSAATDKHGGQPSVMESANCATKTKKTNAGIRR. Over residues 13–22 the composition is skewed to low complexity; sequence PAQSSPMSAA. Positions 54-148 form a DNA-binding region, fork-head; the sequence is KPPYSYIALI…EEGSFRRRPR (95 aa). 2 disordered regions span residues 236–255 and 283–306; these read GSSGGDYSHHDSGSPLLGGG and QPLSPCNSAANPLSSSLSSHSLDQ. The span at 286-306 shows a compositional bias: low complexity; that stretch reads SPCNSAANPLSSSLSSHSLDQ.

It is found in the nucleus. Probable transcription factor. Required for smooth muscle (visceral mesoderm) differentiation during gut development. Also required for normal proliferation of the lateral plate mesoderm. Acts as a downstream mediator of bmp4-signaling. The polypeptide is Forkhead box protein F1 (Xenopus tropicalis (Western clawed frog)).